Reading from the N-terminus, the 525-residue chain is Tigger transposable element-derived protein 2 (525 aa).

The HTH psq-type domain maps to 1-52 (MLGKRKRVVLTIKDKLDIIKKLEEGNSFKKLSVLYGIGESTVRDIKKNKERI). 2 DNA-binding regions (H-T-H motif) span residues 28–48 (FKKLSVLYGIGESTVRDIKKN) and 100–132 (TICAKQARFFFDALGMEGDFNASSGWLTRFKQR). An HTH CENPB-type domain is found at 67–139 (KRKSMKSSTY…KQRHGIPKAA (73 aa)). The DDE-1 domain maps to 168-385 (LLPEQIYGAD…IRSNTITRAW (218 aa)).

This sequence belongs to the tigger transposable element derived protein family.

The protein resides in the nucleus. The polypeptide is Tigger transposable element-derived protein 2 (Tigd2) (Mus musculus (Mouse)).